Here is a 204-residue protein sequence, read N- to C-terminus: Cytochrome P450 monooxygenase PC-23 (204 aa).

C138 contacts heme.

The protein belongs to the cytochrome P450 family. Requires heme as cofactor.

Its pathway is secondary metabolite biosynthesis. Functionally, cytochrome P450 monooxygenase; part of the gene cluster that mediates the biosynthesis of the indole diterpenes penitrems. The geranylgeranyl diphosphate (GGPP) synthase penG catalyzes the first step in penitrem biosynthesis via conversion of farnesyl pyrophosphate and isopentyl pyrophosphate into geranylgeranyl pyrophosphate (GGPP). Condensation of indole-3-glycerol phosphate with GGPP by the prenyl transferase penC then forms 3-geranylgeranylindole (3-GGI). Epoxidation by the FAD-dependent monooxygenase penM leads to a epoxidized-GGI that is substrate of the terpene cyclase penB for cyclization to yield paspaline. Paspaline is subsequently converted to 13-desoxypaxilline by the cytochrome P450 monooxygenase penP, the latter being then converted to paxilline by the cytochrome P450 monooxygenase penQ. Paxilline is converted to beta-paxitriol via C-10 ketoreduction by the short-chain dehydrogenase PC-15 which can be monoprenylated at the C-20 by the indole diterpene prenyltransferase penD. A two-step elimination (acetylation and elimination) process performed by the O-acetyltransferase PC-16 and the P.simplicissimum ptmI-ortholog not yet identified in P.crustosum, leads to the production of the prenylated form of penijanthine. The FAD-linked oxidoreductase ptmO then converts the prenylated form of penijanthine into PC-M5 which is in turn transformed into PC-M4 by the aromatic dimethylallyltransferase PC-22. A series of oxidation steps involving 4 cytochrome P450 monooxygenases (PC-21, PC-05, PC-23, PC-20) and a FAD-dependent monooxygenase (PC-14) are required for the transformation of PC-M4 to penitrems A and E. Synthesis of these final products is proposed to proceed via penitrems D and C (PC-21, PC-05, PC-14) and penitrems B and F (PC-21, PC-05, PC-14, PC-23). This chain is Cytochrome P450 monooxygenase PC-23, found in Penicillium crustosum (Blue mold fungus).